A 285-amino-acid chain; its full sequence is Pantothenate synthetase (285 aa).

30–37 (MGYLHEGH) is a binding site for ATP. The active-site Proton donor is H37. (R)-pantoate is bound at residue Q61. Q61 contacts beta-alanine. Residue 148-151 (GKKD) coordinates ATP. Position 154 (Q154) interacts with (R)-pantoate. ATP-binding positions include I177 and 185–188 (LSSR).

The protein belongs to the pantothenate synthetase family. Homodimer.

The protein resides in the cytoplasm. It carries out the reaction (R)-pantoate + beta-alanine + ATP = (R)-pantothenate + AMP + diphosphate + H(+). It participates in cofactor biosynthesis; (R)-pantothenate biosynthesis; (R)-pantothenate from (R)-pantoate and beta-alanine: step 1/1. Catalyzes the condensation of pantoate with beta-alanine in an ATP-dependent reaction via a pantoyl-adenylate intermediate. In Leptospira borgpetersenii serovar Hardjo-bovis (strain JB197), this protein is Pantothenate synthetase.